Consider the following 251-residue polypeptide: Triosephosphate isomerase, glycosomal (251 aa).

The substrate site is built by asparagine 12 and lysine 14. The active-site Electrophile is histidine 96. The Proton acceptor role is filled by glutamate 168.

Belongs to the triosephosphate isomerase family. In terms of assembly, homodimer.

It is found in the glycosome. It catalyses the reaction D-glyceraldehyde 3-phosphate = dihydroxyacetone phosphate. The protein operates within carbohydrate biosynthesis; gluconeogenesis. It participates in carbohydrate degradation; glycolysis; D-glyceraldehyde 3-phosphate from glycerone phosphate: step 1/1. This Trypanosoma cruzi protein is Triosephosphate isomerase, glycosomal.